Reading from the N-terminus, the 351-residue chain is O-methyltransferase apf6 (351 aa).

Residues glycine 231–glycine 232, asparagine 279–phenylalanine 280, and arginine 295 each bind S-adenosyl-L-methionine. The active-site Proton acceptor is the histidine 299.

It belongs to the class I-like SAM-binding methyltransferase superfamily. Cation-independent O-methyltransferase family.

Its pathway is secondary metabolite biosynthesis. Functionally, O-methyltransferase; part of the gene cluster that mediates the biosynthesis of the cyclic tetrapeptide apicidin F (APF). The non-ribosomal peptide synthetase apf1 incorporates four different amino acids to produce apicidin F: L-phenylalanine, D-pipecolic acid (D-pip), N-methoxy-L-tryptophan and L-2-aminooctanedioic acid. L-Phenylalanine is the only proteinogenic amino acid directly used by apf1. The 3 other apf1 substrates are non-proteinogenic and have to be modified by other enzymes of the cluster. Lysine is converted to delta-1-pyrroline-5-carboxylate (P5C) which is reduced to L-pipecolic acid (L-pip) by apf3. L-pip is epimerized to D-pip, probably by apf1 activity, prior to incorporation. L-Tryptophan is N-oxidyzed by one of the cytochrome P450 monooxygenases (apf7 or apf8), and further methylated at the hydroxy group by the O-methyltransferase apf6 to yield N-methoxy-L-tryptophan. The synthesis of the fourth apf1 substrate is more complex. The fatty acid synthase apf5 is involved in the synthesis of the octanoic acid backbone of L-2-aminooctanedioic acid by fixing one acetyl-CoA unit and three malonyl-CoA units. Then one of the cytochrome P450 monooxygenases (apf7 or apf8) may oxidize this backbone to 2-oxooctanoic acid. The aminotransferase apf4 is predicted to catalyze the exchange of the keto group with an amino group. The next step would be the oxidation of 2-aminooctanoic acid by one of the cytochrome P450 monooxygenases (apf7 or apf8). The last step is the oxidation of 2-amino-8-hydroxyoctanoic acid to 2-aminooctanedioic acid is catalyzed by the FAD-dependent monooxygenase apf9. This chain is O-methyltransferase apf6, found in Gibberella fujikuroi (strain CBS 195.34 / IMI 58289 / NRRL A-6831) (Bakanae and foot rot disease fungus).